Reading from the N-terminus, the 304-residue chain is MMGFLNLYKPKGVTSHDVVDEVRRKLNIRRVGHAGTLDPFAEGVLVVGVGSTTRLLEYLQVERKRYYVKALLGVITETFDITGEIVEERECNIPDERIIDVVKSFVGKYKQVPPAYSAKKYKGERLYKLAREGKIISLPPVDVEIYGIDKIIVKKPHFSFEVEVSKGTYIRSLCMDIGYKLGCGATAKELKRLSVGTFDIRDAINPFEVGREKLLESLIDVQKVLPLPKVEIYKDFVENIYNGNQPTLDFVKEMVDSFSKDDDVMLICNGQLVAIAKAERNSKFLEKNLPRGRIFKLKKVFKEI.

The active-site Nucleophile is the aspartate 38. The 76-residue stretch at 227 to 302 (LPKVEIYKDF…RIFKLKKVFK (76 aa)) folds into the PUA domain.

It belongs to the pseudouridine synthase TruB family. Type 1 subfamily.

It carries out the reaction uridine(55) in tRNA = pseudouridine(55) in tRNA. Its function is as follows. Responsible for synthesis of pseudouridine from uracil-55 in the psi GC loop of transfer RNAs. The chain is tRNA pseudouridine synthase B from Thermosipho melanesiensis (strain DSM 12029 / CIP 104789 / BI429).